The chain runs to 196 residues: Putative 3-methyladenine DNA glycosylase (196 aa).

It belongs to the DNA glycosylase MPG family.

This Chlamydia pneumoniae (Chlamydophila pneumoniae) protein is Putative 3-methyladenine DNA glycosylase.